Consider the following 454-residue polypeptide: Bifunctional protein GlmU (454 aa).

The tract at residues 1-227 (MTQLSVVILA…FMEVEGANNR (227 aa)) is pyrophosphorylase. UDP-N-acetyl-alpha-D-glucosamine contacts are provided by residues 9–12 (LAAG), Lys-23, Gln-74, 79–80 (GT), 101–103 (YGD), Gly-138, Glu-152, Asn-167, and Asn-225. Asp-103 is a Mg(2+) binding site. Position 225 (Asn-225) interacts with Mg(2+). The segment at 228-248 (LQLAALERFYQKTQAEKLLLA) is linker. The interval 249–454 (GVRLIDPARF…QGWQRPTKKK (206 aa)) is N-acetyltransferase. Arg-331 and Lys-349 together coordinate UDP-N-acetyl-alpha-D-glucosamine. His-361 acts as the Proton acceptor in catalysis. UDP-N-acetyl-alpha-D-glucosamine is bound by residues Tyr-364 and Asn-375. Residues Ala-378, 384–385 (NY), Ser-403, Ala-421, and Arg-438 contribute to the acetyl-CoA site.

It in the N-terminal section; belongs to the N-acetylglucosamine-1-phosphate uridyltransferase family. In the C-terminal section; belongs to the transferase hexapeptide repeat family. As to quaternary structure, homotrimer. Mg(2+) is required as a cofactor.

The protein localises to the cytoplasm. It carries out the reaction alpha-D-glucosamine 1-phosphate + acetyl-CoA = N-acetyl-alpha-D-glucosamine 1-phosphate + CoA + H(+). The enzyme catalyses N-acetyl-alpha-D-glucosamine 1-phosphate + UTP + H(+) = UDP-N-acetyl-alpha-D-glucosamine + diphosphate. It participates in nucleotide-sugar biosynthesis; UDP-N-acetyl-alpha-D-glucosamine biosynthesis; N-acetyl-alpha-D-glucosamine 1-phosphate from alpha-D-glucosamine 6-phosphate (route II): step 2/2. The protein operates within nucleotide-sugar biosynthesis; UDP-N-acetyl-alpha-D-glucosamine biosynthesis; UDP-N-acetyl-alpha-D-glucosamine from N-acetyl-alpha-D-glucosamine 1-phosphate: step 1/1. It functions in the pathway bacterial outer membrane biogenesis; LPS lipid A biosynthesis. Catalyzes the last two sequential reactions in the de novo biosynthetic pathway for UDP-N-acetylglucosamine (UDP-GlcNAc). The C-terminal domain catalyzes the transfer of acetyl group from acetyl coenzyme A to glucosamine-1-phosphate (GlcN-1-P) to produce N-acetylglucosamine-1-phosphate (GlcNAc-1-P), which is converted into UDP-GlcNAc by the transfer of uridine 5-monophosphate (from uridine 5-triphosphate), a reaction catalyzed by the N-terminal domain. In Actinobacillus pleuropneumoniae serotype 3 (strain JL03), this protein is Bifunctional protein GlmU.